The sequence spans 135 residues: Class I hydrophobin dewA (135 aa).

The signal sequence occupies residues 1-18 (MRFIVSLLAFTAAATATA). 4 cysteine pairs are disulfide-bonded: cysteine 44/cysteine 114, cysteine 51/cysteine 108, cysteine 52/cysteine 84, and cysteine 115/cysteine 122. An N-linked (GlcNAc...) asparagine glycan is attached at asparagine 60.

The protein belongs to the fungal hydrophobin family. In terms of assembly, forms homodimers at high concentrations, and these dimers are off-pathway to rodlet formation. Dissociation of the dimers into monomers, with resultant exposure of the hydrophobic face, is necessary for self-assembly to form functional amyloid fibrils called rodlets. Self-assembly into fibrillar rodlets occurs spontaneously at hydrophobic:hydrophilic interfaces and the rodlets further associate laterally to form amphipathic monolayers.

Its subcellular location is the secreted. It is found in the spore wall. In terms of biological role, aerial growth, conidiation, and dispersal of filamentous fungi in the environment rely upon a capability of their secreting small amphipathic proteins called hydrophobins (HPBs) with low sequence identity. Class I can self-assemble into an outermost layer of rodlet bundles on aerial cell surfaces, conferring cellular hydrophobicity that supports fungal growth, development and dispersal; whereas Class II form highly ordered films at water-air interfaces through intermolecular interactions but contribute nothing to the rodlet structure. DewA is a class I hydrophobin that contributes to spore wall hydrophobicity. The protein is Class I hydrophobin dewA of Emericella nidulans (strain FGSC A4 / ATCC 38163 / CBS 112.46 / NRRL 194 / M139) (Aspergillus nidulans).